The primary structure comprises 122 residues: Cytochrome c-556 (122 aa).

Heme contacts are provided by Met-11, Cys-111, Cys-114, and His-115. 4 residues coordinate heme c: Met-11, Cys-111, Cys-114, and His-115.

Monomer. Post-translationally, binds 1 heme c group covalently per subunit.

Its function is as follows. Low-spin monoheme cytochrome c. This Agrobacterium tumefaciens (strain B2A) protein is Cytochrome c-556.